We begin with the raw amino-acid sequence, 405 residues long: Mucosal addressin cell adhesion molecule 1 (405 aa).

The first 21 residues, 1-21 (MESILALLLALALVPYQLSRG), serve as a signal peptide directing secretion. Ig-like domains are found at residues 22–109 (QSFQ…ILVY) and 110–227 (AFPD…TSPK). The Extracellular portion of the chain corresponds to 22–364 (QSFQVNPPES…PGQVTPNSSS (343 aa)). 3 disulfides stabilise this stretch: Cys-45-Cys-91, Cys-49-Cys-95, and Cys-132-Cys-200. Positions 221 to 257 (QSQTSPKPPNTTSAEPYILTSSSTAEAVSTGLNITTL) are mucin-like. Asn-230 and Asn-253 each carry an N-linked (GlcNAc...) asparagine glycan. Residues 255-275 (TTLPSAPPYPKLSPRTLSSEG) are disordered. The region spanning 258-357 (PSAPPYPKLS…EVTNLYVPGQ (100 aa)) is the Ig-like 3 domain. The cysteines at positions 293 and 341 are disulfide-linked. N-linked (GlcNAc...) asparagine glycosylation occurs at Asn-361. A helical membrane pass occupies residues 365–385 (TVVLWIGSLVLGLLALVFLAY). Residues 386–405 (RLWKCYRPGPRPDTSSCTHL) lie on the Cytoplasmic side of the membrane.

As to quaternary structure, homodimer. Post-translationally, O-glycosylated; contains syalic acid. The Ser/Thr-rich mucin-like domain may provide possible sites for O-glycosylation. Highly expressed on high endothelial venules (HEV) of organized intestinal lymphoid tissues like the Peyer patches and mesenteric lymph nodes, and in the lamina propria of the intestine. Some expression found in the spleen, and low levels of expression in the peripheral lymph nodes and the lactating mammary gland. No expression was detected in the liver, kidneys, lungs or in normal brain. Expressed as well in brain endothelioma cells, and mucosal tissues which are in a chronic state of inflammation, such as inflamed pancreas.

The protein resides in the membrane. In terms of biological role, cell adhesion leukocyte receptor expressed by mucosal venules, helps to direct lymphocyte traffic into mucosal tissues including the Peyer patches and the intestinal lamina propria. It can bind both the integrin alpha-4/beta-7 and L-selectin, regulating both the passage and retention of leukocytes. Both isoform 1 and isoform 2 can adhere to integrin alpha-4/beta-7. Isoform 2, lacking the mucin-like domain, may be specialized in supporting integrin alpha-4/beta-7-dependent adhesion strengthening, independent of L-selectin binding. This is Mucosal addressin cell adhesion molecule 1 (Madcam1) from Mus musculus (Mouse).